The sequence spans 536 residues: Suppressor of cytokine signaling 5 (536 aa).

A required for interaction with IL4R region spans residues 1–50 (MDKVGKMWNNFKYRCQNLFGHEGGSRSENVDMNSNRCLSVKEKNISIGDS). A disordered region spans residues 115–175 (SRHAPWGGKK…SVSSRTVGSR (61 aa)). The segment covering 158–169 (VSSVHDMDSVSS) has biased composition (low complexity). The SH2 domain maps to 381-476 (CYWGVMDRYE…FFEPLLTISL (96 aa)). In terms of domain architecture, SOCS box spans 471–520 (LLTISLNRTFPFSLQYICRAVICRCTTYDGIDGLPLPSMLQDFLKEYHYK).

As to quaternary structure, interacts with IL4R; inhibits IL4 signaling. Interacts with EGFR. Interacts with ELOB and ELOC; mediates EGFR ubiquitination and degradation. In terms of processing, phosphorylated. Phosphorylation is induced by EGF.

The protein operates within protein modification; protein ubiquitination. Functionally, SOCS family proteins form part of a classical negative feedback system that regulates cytokine signal transduction. May be a substrate-recognition component of a SCF-like ECS (Elongin BC-CUL2/5-SOCS-box protein) E3 ubiquitin-protein ligase complex which mediates the ubiquitination and subsequent proteasomal degradation of target proteins. Inhibits for instance EGF signaling by mediating the degradation of the EGF receptor/EGFR. Involved in the regulation of T-helper cell differentiation by inhibiting of the IL4 signaling pathway which promotes differentiation into the Th2 phenotype. Can also partially inhibit IL6 and LIF signaling. The sequence is that of Suppressor of cytokine signaling 5 (SOCS5) from Homo sapiens (Human).